The primary structure comprises 483 residues: Triplex capsid protein 1 (483 aa).

Positions 24–40 match the RIP homotypic interaction motif (RHIM) motif; sequence LLGNNRFIQIGNGLHMT.

The protein belongs to the herpesviridae TRX1 protein family. Interacts with TRX2, MCP and capsid vertex component 2/CVC2. Self-assembles into homo-oligomeric amyloid fibrils. Interacts with host ZBP1; this interaction prevents host necroptosis and extrinsic apoptosis. Interacts with host RIPK3.

It localises to the virion. The protein localises to the host nucleus. Its function is as follows. Structural component of the T=16 icosahedral capsid. The capsid is composed of pentamers and hexamers of major capsid protein/MCP, which are linked together by heterotrimers called triplexes. These triplexes are formed by a single molecule of triplex protein 1/TRX1 and two copies of triplex protein 2/TRX2. Additionally, TRX1 is required for efficient transport of TRX2 to the nucleus, which is the site of capsid assembly. Also prevents necroptosis and extrinsic apoptosis by sequestering host ZBP1 into large, insoluble supercomplexes and impairing its ability to interact with RIPK3. This chain is Triplex capsid protein 1, found in Varicella-zoster virus (strain Dumas) (HHV-3).